An 815-amino-acid polypeptide reads, in one-letter code: Neuronal PAS domain-containing protein 2 (815 aa).

Basic and acidic residues predominate over residues 1–10 (MDEDEKDRAK). The interval 1-21 (MDEDEKDRAKRASRNKSEKKR) is disordered. Residues 1–61 (MDEDEKDRAK…VIGFLQKHNE (61 aa)) are sufficient for heterodimer formation with BMAL1, E-box binding and for the effect of NADPH. The bHLH domain occupies 9 to 59 (AKRASRNKSEKKRRDQFNVLIKELSSMLPGNTRKMDKTTVLEKVIGFLQKH). Residues 82–152 (NEEFTQLMLE…KMLSSCMLMT (71 aa)) enclose the PAS 1 domain. Heme b contacts are provided by H119 and H171. The PAS 2 domain occupies 237–307 (FLKEMCIVEE…RCHEHLMQFG (71 aa)). The 44-residue stretch at 311-354 (SCCYRFLTKGQQWIWLQTHYYITYHQWNSKPEFIVCTHMVVSYA) folds into the PAC domain. Over residues 405–420 (RTPSVSSRSSPKSSHT) the composition is skewed to low complexity. 3 disordered regions span residues 405 to 467 (RTPS…SLPS), 584 to 656 (PGQI…AAGC), and 728 to 815 (FATT…QPLR). 3 stretches are compositionally biased toward polar residues: residues 425–462 (PAST…TALQ), 588–608 (ASPQ…SSQG), and 616–630 (ELTT…STAT). 2 stretches are compositionally biased toward low complexity: residues 633 to 655 (GPST…SAAG) and 732 to 752 (PPSQ…HQQQ). Over residues 753 to 786 (RYLQVQTPSSLHNEQTDSLLLSSYSPQQGNMGYH) the composition is skewed to polar residues. Low complexity predominate over residues 787–815 (QTQQQQQQQQLPRRSNSLSESSNLPQPLR).

In terms of assembly, component of the circadian clock oscillator which includes the CRY proteins, CLOCK or NPAS2, BMAL1 or BMAL2, CSNK1D and/or CSNK1E, TIMELESS and the PER proteins. Efficient DNA binding requires dimerization with another bHLH protein. Forms a heterodimer with BMAL1 and this heterodimerization is required for E-box-dependent transactivation. The cofactor is heme. As to expression, expressed in the retinal photoreceptor cells (at protein level). Expressed in the pineal gland and retina.

It localises to the nucleus. With respect to regulation, carbon monoxide (CO) and the redox state of the cell can modulate the transcriptional activity of the NPAS2-BMAL1 heterodimer. NADH and NADPH enhance the DNA-binding activity of the heterodimer whereas CO binds the heme group in NPAS2 and inhibits the DNA-binding activity of the heterodimer. In terms of biological role, transcriptional activator which forms a core component of the circadian clock. The circadian clock, an internal time-keeping system, regulates various physiological processes through the generation of approximately 24 hour circadian rhythms in gene expression, which are translated into rhythms in metabolism and behavior. It is derived from the Latin roots 'circa' (about) and 'diem' (day) and acts as an important regulator of a wide array of physiological functions including metabolism, sleep, body temperature, blood pressure, endocrine, immune, cardiovascular, and renal function. Consists of two major components: the central clock, residing in the suprachiasmatic nucleus (SCN) of the brain, and the peripheral clocks that are present in nearly every tissue and organ system. Both the central and peripheral clocks can be reset by environmental cues, also known as Zeitgebers (German for 'timegivers'). The predominant Zeitgeber for the central clock is light, which is sensed by retina and signals directly to the SCN. The central clock entrains the peripheral clocks through neuronal and hormonal signals, body temperature and feeding-related cues, aligning all clocks with the external light/dark cycle. Circadian rhythms allow an organism to achieve temporal homeostasis with its environment at the molecular level by regulating gene expression to create a peak of protein expression once every 24 hours to control when a particular physiological process is most active with respect to the solar day. Transcription and translation of core clock components (CLOCK, NPAS2, BMAL1, BMAL2, PER1, PER2, PER3, CRY1 and CRY2) plays a critical role in rhythm generation, whereas delays imposed by post-translational modifications (PTMs) are important for determining the period (tau) of the rhythms (tau refers to the period of a rhythm and is the length, in time, of one complete cycle). A diurnal rhythm is synchronized with the day/night cycle, while the ultradian and infradian rhythms have a period shorter and longer than 24 hours, respectively. Disruptions in the circadian rhythms contribute to the pathology of cardiovascular diseases, cancer, metabolic syndromes and aging. A transcription/translation feedback loop (TTFL) forms the core of the molecular circadian clock mechanism. Transcription factors, CLOCK or NPAS2 and BMAL1 or BMAL2, form the positive limb of the feedback loop, act in the form of a heterodimer and activate the transcription of core clock genes and clock-controlled genes (involved in key metabolic processes), harboring E-box elements (5'-CACGTG-3') within their promoters. The core clock genes: PER1/2/3 and CRY1/2 which are transcriptional repressors form the negative limb of the feedback loop and interact with the CLOCK|NPAS2-BMAL1|BMAL2 heterodimer inhibiting its activity and thereby negatively regulating their own expression. This heterodimer also activates nuclear receptors NR1D1/2 and RORA/B/G, which form a second feedback loop and which activate and repress BMAL1 transcription, respectively. NPAS2 positively regulates the circadian expression of AANAT in the retinal photoreceptor cells. The polypeptide is Neuronal PAS domain-containing protein 2 (NPAS2) (Gallus gallus (Chicken)).